Consider the following 175-residue polypeptide: Large ribosomal subunit protein uL10 (175 aa).

Belongs to the universal ribosomal protein uL10 family. Part of the ribosomal stalk of the 50S ribosomal subunit. The N-terminus interacts with L11 and the large rRNA to form the base of the stalk. The C-terminus forms an elongated spine to which L12 dimers bind in a sequential fashion forming a multimeric L10(L12)X complex.

Its function is as follows. Forms part of the ribosomal stalk, playing a central role in the interaction of the ribosome with GTP-bound translation factors. This chain is Large ribosomal subunit protein uL10, found in Prochlorococcus marinus (strain AS9601).